Consider the following 314-residue polypeptide: Short-chain dehydrogenase/reductase sthC (314 aa).

The span at 1 to 10 (MAPAETTGNV) shows a compositional bias: polar residues. The segment at 1-27 (MAPAETTGNVQRPEAGKQSMGSFWTQM) is disordered. Residues V56, K80, D105, N132, and R167 each coordinate NADP(+). S191 acts as the Proton donor in catalysis. Residues Y222 and K226 each coordinate NADP(+). Y222 functions as the Proton acceptor in the catalytic mechanism. K226 (lowers pKa of active site Tyr) is an active-site residue.

It belongs to the short-chain dehydrogenases/reductases (SDR) family.

The enzyme catalyses dehydroprobetaenone I + AH2 = probetaenone I + A. The catalysed reaction is betaenone C + AH2 = betaenone B + A. It participates in mycotoxin biosynthesis. Its function is as follows. Short-chain dehydrogenase/reductase; part of the gene cluster that mediates the biosynthesis of the phytotoxin stemphyloxin II. The first step of the pathway is the synthesis of dehydroprobetaenone I by the polyketide synthase sthA and the enoyl reductase sthE via condensation of one acetyl-CoA starter unit with 7 malonyl-CoA units and 5 methylations. The C-terminal reductase (R) domain of sthA catalyzes the reductive release of the polyketide chain. Because sthA lacks a designated enoylreductase (ER) domain, the required activity is provided the enoyl reductase sthE. The short-chain dehydrogenase/reductase sthC then catalyzes reduction of dehydroprobetaenone I to probetaenone I. The cytochrome P450 monooxygenase sthF catalyzes successive epoxidation, oxidation (resulting from epoxide opening) and hydroxylation to install a tertiary alcohol in the decaline ring to yield betaenone C from dehydroprobetaenone I and betaenone B from probetaenone I. The FAD-linked oxidoreductase sthB is responsible for the conversion of betaenone C to betaenone A via an intramolecular aldol reaction between C-1 and C-17 to form the bridged tricyclic system in betaenone A. Finally, the cytochrome P450 monooxygenase sthD catalyzes the hydroxylation of C-15 to afford the final metabolite stemphyloxin II. This chain is Short-chain dehydrogenase/reductase sthC, found in Phaeosphaeria nodorum (strain SN15 / ATCC MYA-4574 / FGSC 10173) (Glume blotch fungus).